Here is a 520-residue protein sequence, read N- to C-terminus: Amine oxidase [flavin-containing] B (520 aa).

At serine 2 the chain carries N-acetylserine. Residues serine 2 to valine 489 are Cytoplasmic-facing. At lysine 52 the chain carries N6-acetyllysine. Cysteine 397 is modified (S-8alpha-FAD cysteine). The helical; Anchor for type IV membrane protein transmembrane segment at proline 490 to leucine 516 threads the bilayer. The Mitochondrial intermembrane segment spans residues phenylalanine 517–phenylalanine 520.

It belongs to the flavin monoamine oxidase family. As to quaternary structure, monomer, homo- or heterodimer (containing two subunits of similar size). Each subunit contains a covalently bound flavin. Enzymatically active as monomer. Requires FAD as cofactor.

It localises to the mitochondrion outer membrane. It carries out the reaction a secondary aliphatic amine + O2 + H2O = a primary amine + an aldehyde + H2O2. The enzyme catalyses (R)-adrenaline + O2 + H2O = (R)-3,4-dihydroxymandelaldehyde + methylamine + H2O2. The catalysed reaction is a primary methyl amine + O2 + H2O = an aldehyde + H2O2 + NH4(+). It catalyses the reaction dopamine + O2 + H2O = 3,4-dihydroxyphenylacetaldehyde + H2O2 + NH4(+). It carries out the reaction tyramine + O2 + H2O = (4-hydroxyphenyl)acetaldehyde + H2O2 + NH4(+). The enzyme catalyses (R)-noradrenaline + O2 + H2O = (R)-3,4-dihydroxymandelaldehyde + H2O2 + NH4(+). The catalysed reaction is benzylamine + O2 + H2O = benzaldehyde + H2O2 + NH4(+). It catalyses the reaction 2-phenylethylamine + O2 + H2O = 2-phenylacetaldehyde + H2O2 + NH4(+). It carries out the reaction N-acetylputrescine + O2 + H2O = 4-acetamidobutanal + H2O2 + NH4(+). Functionally, catalyzes the oxidative deamination of primary and some secondary amines such as neurotransmitters, and exogenous amines including the tertiary amine, neurotoxin 1-methyl-4-phenyl-1,2,3,6-tetrahydropyridine (MPTP), with concomitant reduction of oxygen to hydrogen peroxide and participates in the metabolism of neuroactive and vasoactive amines in the central nervous system and peripheral tissues. Preferentially degrades benzylamine and phenylethylamine. This is Amine oxidase [flavin-containing] B from Rattus norvegicus (Rat).